Reading from the N-terminus, the 291-residue chain is Shikimate dehydrogenase (NADP(+)) (291 aa).

Shikimate-binding positions include 18–20 and T70; that span reads SLS. K74 acts as the Proton acceptor in catalysis. Shikimate-binding residues include N95 and D110. Residues 134–138 and V228 contribute to the NADP(+) site; that span reads GAGGA. Residue Y230 participates in shikimate binding. G251 provides a ligand contact to NADP(+).

It belongs to the shikimate dehydrogenase family. Homodimer.

The catalysed reaction is shikimate + NADP(+) = 3-dehydroshikimate + NADPH + H(+). Its pathway is metabolic intermediate biosynthesis; chorismate biosynthesis; chorismate from D-erythrose 4-phosphate and phosphoenolpyruvate: step 4/7. In terms of biological role, involved in the biosynthesis of the chorismate, which leads to the biosynthesis of aromatic amino acids. Catalyzes the reversible NADPH linked reduction of 3-dehydroshikimate (DHSA) to yield shikimate (SA). The protein is Shikimate dehydrogenase (NADP(+)) of Streptomyces avermitilis (strain ATCC 31267 / DSM 46492 / JCM 5070 / NBRC 14893 / NCIMB 12804 / NRRL 8165 / MA-4680).